The chain runs to 720 residues: Fatty acid CoA ligase Acsl3 (720 aa).

A helical; Signal-anchor for type III membrane protein transmembrane segment spans residues 21-41; it reads ILLYFIHFIISLYTILTYIPF. The Cytoplasmic segment spans residues 42-720; sequence YFLCESKQEK…ADIERMYGRK (679 aa). A Phosphoserine modification is found at S683.

This sequence belongs to the ATP-dependent AMP-binding enzyme family. The cofactor is Mg(2+).

The protein resides in the mitochondrion outer membrane. It localises to the peroxisome membrane. Its subcellular location is the microsome membrane. The protein localises to the endoplasmic reticulum membrane. The catalysed reaction is a long-chain fatty acid + ATP + CoA = a long-chain fatty acyl-CoA + AMP + diphosphate. The enzyme catalyses (E)-hexadec-2-enoate + ATP + CoA = (2E)-hexadecenoyl-CoA + AMP + diphosphate. It carries out the reaction (5Z,8Z,11Z,14Z)-eicosatetraenoate + ATP + CoA = (5Z,8Z,11Z,14Z)-eicosatetraenoyl-CoA + AMP + diphosphate. It catalyses the reaction 15-hydroxy-(5Z,8Z,11Z,13E)-eicosatetraenoate + ATP + CoA = 15-hydroxy-(5Z,8Z,11Z,13E)-eicosatetraenoyl-CoA + AMP + diphosphate. The catalysed reaction is 12-hydroxy-(5Z,8Z,10E,14Z)-eicosatetraenoate + ATP + CoA = 12-hydroxy-(5Z,8Z,10E,14Z)-eicosatetraenoyl-CoA + AMP + diphosphate. The enzyme catalyses 5-hydroxy-(6E,8Z,11Z,14Z)-eicosatetraenoate + ATP + CoA = 5-hydroxy-(6E,8Z,11Z,14Z)-eicosatetraenoyl-CoA + AMP + diphosphate. It carries out the reaction 14,15-epoxy-(5Z,8Z,11Z)-eicosatrienoate + ATP + CoA = 14,15-epoxy-(5Z,8Z,11Z)-eicosatrienoyl-CoA + AMP + diphosphate. It catalyses the reaction 11,12-epoxy-(5Z,8Z,14Z)-eicosatrienoate + ATP + CoA = 11,12-epoxy-(5Z,8Z,14Z)-eicosatrienoyl-CoA + AMP + diphosphate. The catalysed reaction is a medium-chain fatty acid + ATP + CoA = a medium-chain fatty acyl-CoA + AMP + diphosphate. The enzyme catalyses hexadecanoate + ATP + CoA = hexadecanoyl-CoA + AMP + diphosphate. It carries out the reaction tetradecanoate + ATP + CoA = tetradecanoyl-CoA + AMP + diphosphate. It catalyses the reaction dodecanoate + ATP + CoA = dodecanoyl-CoA + AMP + diphosphate. The catalysed reaction is octadecanoate + ATP + CoA = octadecanoyl-CoA + AMP + diphosphate. The enzyme catalyses eicosanoate + ATP + CoA = eicosanoyl-CoA + AMP + diphosphate. It carries out the reaction (9Z)-octadecenoate + ATP + CoA = (9Z)-octadecenoyl-CoA + AMP + diphosphate. It catalyses the reaction (9Z)-hexadecenoate + ATP + CoA = (9Z)-hexadecenoyl-CoA + AMP + diphosphate. The catalysed reaction is (9Z,12Z)-octadecadienoate + ATP + CoA = (9Z,12Z)-octadecadienoyl-CoA + AMP + diphosphate. The enzyme catalyses (9Z,12Z,15Z)-octadecatrienoate + ATP + CoA = (9Z,12Z,15Z)-octadecatrienoyl-CoA + AMP + diphosphate. It carries out the reaction (4Z,7Z,10Z,13Z,16Z,19Z)-docosahexaenoate + ATP + CoA = (4Z,7Z,10Z,13Z,16Z,19Z)-docosahexaenoyl-CoA + AMP + diphosphate. It catalyses the reaction (5Z,8Z,11Z,14Z,17Z)-eicosapentaenoate + ATP + CoA = (5Z,8Z,11Z,14Z,17Z)-eicosapentaenoyl-CoA + AMP + diphosphate. The catalysed reaction is a fatty acid + ATP + CoA = a fatty acyl-CoA + AMP + diphosphate. In terms of biological role, acyl-CoA synthetases (ACSL) activates long-chain fatty acids for both synthesis of cellular lipids, and degradation via beta-oxidation. ACSL3 is required for the incorporation of fatty acids into phosphatidylcholine, the major phospholipid located on the surface of VLDL (very low density lipoproteins). Has mainly an anabolic role in energy metabolism. Mediates hepatic lipogenesis. Preferentially uses myristate, laurate, arachidonate and eicosapentaenoate as substrates. Both isoforms exhibit the same level of activity. This chain is Fatty acid CoA ligase Acsl3, found in Mus musculus (Mouse).